Here is a 339-residue protein sequence, read N- to C-terminus: MGYSYRQAGVDIDAGNQAVELMKPAVKRTVRPEVMGGLGGFGGLFALDLKKYPEPVLVSGTDGVGTKLKLAFQMNRHDTIGQDAVAMCVNDILVQGAEPLFFLDYLAVGKLVPERVAQVVGGIAKGCELAGCALIGGETAEMPGFYDEGEYDIAGFAVGAVNRPDLIDGSQIQAGDVLIGLPSSGFHSNGYSLVRKIFTPDLWEKNYPELGETLGEALIRPTRIYVKTVLPLIESRKVLGMAHITGGGLTENIPRILPEGLGIKIARSAWQVPALFTLLQRLGEVEEAEMLRTFNMGIGFVLIVHPEDVDFIQTQLQAAGEKCFVLGEVSGQSEGVSYL.

The protein belongs to the AIR synthase family.

The protein resides in the cytoplasm. The catalysed reaction is 2-formamido-N(1)-(5-O-phospho-beta-D-ribosyl)acetamidine + ATP = 5-amino-1-(5-phospho-beta-D-ribosyl)imidazole + ADP + phosphate + H(+). It participates in purine metabolism; IMP biosynthesis via de novo pathway; 5-amino-1-(5-phospho-D-ribosyl)imidazole from N(2)-formyl-N(1)-(5-phospho-D-ribosyl)glycinamide: step 2/2. This chain is Phosphoribosylformylglycinamidine cyclo-ligase, found in Desulfitobacterium hafniense (strain DSM 10664 / DCB-2).